The following is a 126-amino-acid chain: Large ribosomal subunit protein uL22 (126 aa).

The protein belongs to the universal ribosomal protein uL22 family. Part of the 50S ribosomal subunit.

Functionally, this protein binds specifically to 23S rRNA; its binding is stimulated by other ribosomal proteins, e.g. L4, L17, and L20. It is important during the early stages of 50S assembly. It makes multiple contacts with different domains of the 23S rRNA in the assembled 50S subunit and ribosome. Its function is as follows. The globular domain of the protein is located near the polypeptide exit tunnel on the outside of the subunit, while an extended beta-hairpin is found that lines the wall of the exit tunnel in the center of the 70S ribosome. This chain is Large ribosomal subunit protein uL22, found in Prochlorococcus marinus (strain NATL2A).